A 350-amino-acid polypeptide reads, in one-letter code: Probable poly-beta-1,6-N-acetyl-D-glucosamine export protein (350 aa).

Transmembrane regions (helical) follow at residues 7–29, 44–66, 79–101, 116–138, 145–167, 187–204, 211–233, 243–262, 269–291, and 306–328; these read ELVY…TQIT, FYIR…LLTT, TRVK…SESL, LLGQ…SYII, LFNS…YYFT, IIFG…MGYN, FLER…FIAL, SFSY…ILGI, ILFN…HPII, and TMVF…GMIL.

Belongs to the acyltransferase 3 family.

The protein resides in the cell membrane. In terms of biological role, presumably involved in the export of the biofilm adhesin polysaccharide poly-beta-1,6-N-acetyl-D-glucosamine (PNAG, also referred to as PIA) across the cell membrane. This chain is Probable poly-beta-1,6-N-acetyl-D-glucosamine export protein (icaC), found in Staphylococcus aureus (strain Mu50 / ATCC 700699).